Here is a 315-residue protein sequence, read N- to C-terminus: Glycine--tRNA ligase alpha subunit (315 aa).

This sequence belongs to the class-II aminoacyl-tRNA synthetase family. In terms of assembly, tetramer of two alpha and two beta subunits.

Its subcellular location is the cytoplasm. It carries out the reaction tRNA(Gly) + glycine + ATP = glycyl-tRNA(Gly) + AMP + diphosphate. The polypeptide is Glycine--tRNA ligase alpha subunit (Sorangium cellulosum (strain So ce56) (Polyangium cellulosum (strain So ce56))).